A 255-amino-acid chain; its full sequence is Small ribosomal subunit protein uS2 (255 aa).

Residues 231–255 are disordered; that stretch reads RLQTGAEEEFSTEGEEVVEETPAEA. Positions 236 to 255 are enriched in acidic residues; sequence AEEEFSTEGEEVVEETPAEA.

This sequence belongs to the universal ribosomal protein uS2 family.

The protein is Small ribosomal subunit protein uS2 of Geobacter sp. (strain M21).